Reading from the N-terminus, the 477-residue chain is Probable malate:quinone oxidoreductase (477 aa).

The protein belongs to the MQO family. Requires FAD as cofactor.

The enzyme catalyses (S)-malate + a quinone = a quinol + oxaloacetate. It participates in carbohydrate metabolism; tricarboxylic acid cycle; oxaloacetate from (S)-malate (quinone route): step 1/1. The protein is Probable malate:quinone oxidoreductase of Synechococcus sp. (strain RCC307).